Consider the following 1096-residue polypeptide: Serine-repeat antigen protein 3 (1096 aa).

The signal sequence occupies residues 1-21 (MARLSSIVFIICLLLCNNAIS). Positions 28 to 205 (PSSGGTLSGG…RSPPPQVNNI (178 aa)) are disordered. Residues 77 to 97 (NSDSTGDSSLGSTGSNGSQPA) are compositionally biased toward low complexity. An N-linked (GlcNAc...) asparagine glycan is attached at asparagine 92. Residues 102–113 (KEPEPTTPKEPE) show a composition bias toward basic and acidic residues. Residues 123-147 (VTPQKTAETASGKQVSPTPSENPPS) are compositionally biased toward polar residues. Positions 149-161 (DTPKPESSSEKKV) are enriched in basic and acidic residues. N-linked (GlcNAc...) asparagine glycosylation is found at asparagine 204, asparagine 607, asparagine 637, asparagine 662, asparagine 671, asparagine 712, asparagine 892, and asparagine 951. 2 disordered regions span residues 916 to 952 (EAKNDDENDQNYGNLDVSGQSENHQNDPKNPQPQANS) and 964 to 1006 (NQRT…ASAN). Polar residues-rich tracts occupy residues 925 to 952 (QNYGNLDVSGQSENHQNDPKNPQPQANS) and 964 to 975 (NQRTADSNPNAQ). The segment covering 976–1006 (STPSPNTTVTDTVNSNTANSNTANSNTASAN) has biased composition (low complexity). Asparagine 981 and asparagine 1039 each carry an N-linked (GlcNAc...) asparagine glycan.

This sequence belongs to the peptidase C1 family. Post-translationally, proteolytically cleaved in both blood and liver stage parasites. Precursor of 130 kDa is processed into 72 kDa and 55 kDa forms. Proteolytically cleaved by SUB1.

It is found in the cell membrane. Its subcellular location is the parasitophorous vacuole. The protein resides in the secreted. It localises to the host cytoplasm. Putative cysteine protease. Probably involved in merozoite release from the parasitophorous vacuole during liver stages. This is Serine-repeat antigen protein 3 from Plasmodium berghei (strain Anka).